The primary structure comprises 427 residues: tRNA(Ile)-lysidine synthase (427 aa).

18 to 23 (SGGLDS) provides a ligand contact to ATP.

It belongs to the tRNA(Ile)-lysidine synthase family.

The protein localises to the cytoplasm. It catalyses the reaction cytidine(34) in tRNA(Ile2) + L-lysine + ATP = lysidine(34) in tRNA(Ile2) + AMP + diphosphate + H(+). Ligates lysine onto the cytidine present at position 34 of the AUA codon-specific tRNA(Ile) that contains the anticodon CAU, in an ATP-dependent manner. Cytidine is converted to lysidine, thus changing the amino acid specificity of the tRNA from methionine to isoleucine. This Pseudomonas putida (strain ATCC 47054 / DSM 6125 / CFBP 8728 / NCIMB 11950 / KT2440) protein is tRNA(Ile)-lysidine synthase.